Consider the following 171-residue polypeptide: Peptide deformylase (171 aa).

Residues C87 and H129 each coordinate Fe cation. The active site involves E130. H133 contacts Fe cation.

The protein belongs to the polypeptide deformylase family. Fe(2+) serves as cofactor.

The catalysed reaction is N-terminal N-formyl-L-methionyl-[peptide] + H2O = N-terminal L-methionyl-[peptide] + formate. In terms of biological role, removes the formyl group from the N-terminal Met of newly synthesized proteins. Requires at least a dipeptide for an efficient rate of reaction. N-terminal L-methionine is a prerequisite for activity but the enzyme has broad specificity at other positions. This Pseudothermotoga lettingae (strain ATCC BAA-301 / DSM 14385 / NBRC 107922 / TMO) (Thermotoga lettingae) protein is Peptide deformylase.